The chain runs to 114 residues: Vesicle-associated membrane protein 2 (114 aa).

A compositionally biased stretch (pro residues) spans 1 to 11; it reads MSAPAAGPPAA. Residues 1–31 are disordered; it reads MSAPAAGPPAAAPGDGAPQGPPNLTSNRRLQ. Ser-2 is subject to N-acetylserine. Topologically, residues 2 to 92 are cytoplasmic; it reads SAPAAGPPAA…KRKYWWKNMK (91 aa). Positions 29 to 89 constitute a v-SNARE coiled-coil homology domain; that stretch reads RLQQTQAQVD…AKLKRKYWWK (61 aa). Residues 93-111 traverse the membrane as a helical; Anchor for type IV membrane protein segment; the sequence is MMIIMGVICAIILIIIIVY. The Vesicular portion of the chain corresponds to 112 to 114; sequence FST.

Belongs to the synaptobrevin family.

Its subcellular location is the cytoplasmic vesicle. It is found in the secretory vesicle. The protein resides in the synaptic vesicle membrane. The protein localises to the cell membrane. In terms of biological role, involved in the targeting and/or fusion of transport vesicles to their target membrane. Major SNARE protein of synaptic vesicles which mediates fusion of synaptic vesicles to release neurotransmitters. Essential for fast vesicular exocytosis and activity-dependent neurotransmitter release as well as fast endocytosis that mediates rapid reuse of synaptic vesicles. This is Vesicle-associated membrane protein 2 (vamp2) from Xenopus laevis (African clawed frog).